A 338-amino-acid chain; its full sequence is tRNA N6-adenosine threonylcarbamoyltransferase (338 aa).

Residues H111 and H115 each coordinate Fe cation. Substrate-binding positions include 134-138 (LVSGG), D167, G180, and N272. D300 serves as a coordination point for Fe cation.

It belongs to the KAE1 / TsaD family. Requires Fe(2+) as cofactor.

It is found in the cytoplasm. The catalysed reaction is L-threonylcarbamoyladenylate + adenosine(37) in tRNA = N(6)-L-threonylcarbamoyladenosine(37) in tRNA + AMP + H(+). In terms of biological role, required for the formation of a threonylcarbamoyl group on adenosine at position 37 (t(6)A37) in tRNAs that read codons beginning with adenine. Is involved in the transfer of the threonylcarbamoyl moiety of threonylcarbamoyl-AMP (TC-AMP) to the N6 group of A37, together with TsaE and TsaB. TsaD likely plays a direct catalytic role in this reaction. This chain is tRNA N6-adenosine threonylcarbamoyltransferase, found in Shewanella pealeana (strain ATCC 700345 / ANG-SQ1).